Reading from the N-terminus, the 350-residue chain is Xylene/toluene monooxygenase electron transfer component XylA (350 aa).

The region spanning 16-108 (PESTVSVRGQ…DLEIELDTVL (93 aa)) is the 2Fe-2S ferredoxin-type domain. The [2Fe-2S] cluster site is built by Cys52, Cys57, Cys60, and Cys92. Residues 109-350 (GQALVPIETS…ADRFYNRPPC (242 aa)) form a ferredoxin--NADH reductase region. The region spanning 114-213 (PIETSALISK…RAPYGQFGLH (100 aa)) is the FAD-binding FR-type domain.

Belongs to the bacterial ring-hydroxylating dioxygenase ferredoxin reductase family. Monomer. The xylene/toluene monooxygenase is composed of two subunits: the electron transfer component XylA and the hydroxylase component XylM. FAD serves as cofactor. It depends on [2Fe-2S] cluster as a cofactor.

The protein resides in the cell inner membrane. It carries out the reaction 2 reduced [2Fe-2S]-[ferredoxin] + NAD(+) + H(+) = 2 oxidized [2Fe-2S]-[ferredoxin] + NADH. With respect to regulation, the reductase activity is completely inhibited by quercetin (a common inhibitor of mammalian oxidoreductases) and p-chloromercuribenzoate, but not by iodoacetimide, N-ethylmaleimide and pyrrazole. In terms of biological role, component of a monooxygenase that catalyzes the first step in the degradation of xylenes and toluenes. XylA is responsible for the transport of electrons from the electron donor NADH to the terminal hydroxylase component, XylM. This chain is Xylene/toluene monooxygenase electron transfer component XylA, found in Pseudomonas putida (Arthrobacter siderocapsulatus).